The sequence spans 1037 residues: Tyrosine-protein kinase-like otk (1037 aa).

The signal sequence occupies residues methionine 1–serine 22. Asparagine 23 and asparagine 39 each carry an N-linked (GlcNAc...) asparagine glycan. Over asparagine 23–alanine 582 the chain is Extracellular. Ig-like C2-type domains lie at serine 25–serine 115, leucine 114–serine 200, proline 252–asparagine 366, proline 369–asparagine 464, and proline 469–valine 559. Disulfide bonds link cysteine 46–cysteine 96, cysteine 138–cysteine 189, cysteine 277–cysteine 355, and cysteine 400–cysteine 448. N-linked (GlcNAc...) asparagine glycans are attached at residues asparagine 337, asparagine 418, asparagine 430, asparagine 445, asparagine 458, asparagine 513, and asparagine 525. Cysteine 491 and cysteine 543 form a disulfide bridge. The chain crosses the membrane as a helical span at residues valine 583 to tryptophan 603. Residues cysteine 604 to lysine 1037 are Cytoplasmic-facing. 2 disordered regions span residues leucine 618–alanine 681 and alanine 719–methionine 764. Residues glutamine 653–arginine 675 are compositionally biased toward polar residues. Phosphoserine is present on serine 680. In terms of domain architecture, Protein kinase; inactive spans leucine 694–leucine 1035. Basic and acidic residues predominate over residues serine 724–serine 735.

It belongs to the protein kinase superfamily. Tyr protein kinase family. Insulin receptor subfamily. In terms of assembly, interacts with plexA; component of a receptor complex that mediates the repulsive signaling in response to Semaphorin ligands.

It localises to the cell membrane. Acts as a calcium-dependent, homophilic cell adhesion molecule that regulates neural recognition during the development of the nervous system. Component of the repulsive Plexin signaling response to regulate motor axon guidance at the embryonic stage. Also component of a receptor complex that is required in the adult visual system to innervate the lamina layer; specific targeting of R1-R6 axons. This chain is Tyrosine-protein kinase-like otk, found in Drosophila ananassae (Fruit fly).